We begin with the raw amino-acid sequence, 171 residues long: Sec-independent protein translocase protein TatB (171 aa).

A helical transmembrane segment spans residues 1-21 (MFDIGFSELLLVFIIGLVVLG). A disordered region spans residues 117–171 (KDNETAHEGVTPAAAQTQASSPEQKPETTPEPVVKPAADAEPKTAAPSPSSSDKP). Residues 130 to 139 (AAQTQASSPE) show a composition bias toward polar residues.

The protein belongs to the TatB family. As to quaternary structure, the Tat system comprises two distinct complexes: a TatABC complex, containing multiple copies of TatA, TatB and TatC subunits, and a separate TatA complex, containing only TatA subunits. Substrates initially bind to the TatABC complex, which probably triggers association of the separate TatA complex to form the active translocon.

The protein localises to the cell inner membrane. In terms of biological role, part of the twin-arginine translocation (Tat) system that transports large folded proteins containing a characteristic twin-arginine motif in their signal peptide across membranes. Together with TatC, TatB is part of a receptor directly interacting with Tat signal peptides. TatB may form an oligomeric binding site that transiently accommodates folded Tat precursor proteins before their translocation. The polypeptide is Sec-independent protein translocase protein TatB (Escherichia coli O6:K15:H31 (strain 536 / UPEC)).